A 101-amino-acid polypeptide reads, in one-letter code: NAD(P)H-quinone oxidoreductase subunit 4L, chloroplastic (101 aa).

Transmembrane regions (helical) follow at residues 2–22 (MLEH…YGLI), 32–52 (MCLE…SDFF), and 61–81 (IFSI…PAIV).

It belongs to the complex I subunit 4L family. As to quaternary structure, NDH is composed of at least 16 different subunits, 5 of which are encoded in the nucleus.

Its subcellular location is the plastid. The protein resides in the chloroplast thylakoid membrane. The enzyme catalyses a plastoquinone + NADH + (n+1) H(+)(in) = a plastoquinol + NAD(+) + n H(+)(out). It catalyses the reaction a plastoquinone + NADPH + (n+1) H(+)(in) = a plastoquinol + NADP(+) + n H(+)(out). NDH shuttles electrons from NAD(P)H:plastoquinone, via FMN and iron-sulfur (Fe-S) centers, to quinones in the photosynthetic chain and possibly in a chloroplast respiratory chain. The immediate electron acceptor for the enzyme in this species is believed to be plastoquinone. Couples the redox reaction to proton translocation, and thus conserves the redox energy in a proton gradient. The protein is NAD(P)H-quinone oxidoreductase subunit 4L, chloroplastic of Fagopyrum esculentum subsp. ancestrale (Wild buckwheat).